We begin with the raw amino-acid sequence, 181 residues long: Translationally-controlled tumor protein homolog (181 aa).

A TCTP domain is found at 1–181 (MLIFKDAFTD…VKEALVEEKQ (181 aa)).

Belongs to the TCTP family.

It is found in the cytoplasm. Its function is as follows. Involved in calcium binding and microtubule stabilization. This Wuchereria bancrofti protein is Translationally-controlled tumor protein homolog.